We begin with the raw amino-acid sequence, 200 residues long: Riboflavin kinase (200 aa).

The tract at residues 1–20 is disordered; that stretch reads MATARPSIVGPDSGPESPFP. Positions 42 and 44 each coordinate Mg(2+). Glutamate 110 (nucleophile) is an active-site residue.

Belongs to the flavokinase family. Requires Zn(2+) as cofactor. It depends on Mg(2+) as a cofactor.

The enzyme catalyses riboflavin + ATP = FMN + ADP + H(+). It participates in cofactor biosynthesis; FMN biosynthesis; FMN from riboflavin (ATP route): step 1/1. Its function is as follows. Catalyzes the phosphorylation of riboflavin (vitamin B2) to form flavin mononucleotide (FMN) coenzyme. The chain is Riboflavin kinase (FMN1) from Pyricularia oryzae (strain 70-15 / ATCC MYA-4617 / FGSC 8958) (Rice blast fungus).